The chain runs to 215 residues: Orotate phosphoribosyltransferase (215 aa).

Lys-26 is a 5-phospho-alpha-D-ribose 1-diphosphate binding site. 34 to 35 (FF) provides a ligand contact to orotate. 5-phospho-alpha-D-ribose 1-diphosphate is bound by residues 72–73 (YK), Arg-99, Lys-100, Lys-103, His-105, and 125–133 (DDVISSGIS). The orotate site is built by Ser-129 and Arg-157.

This sequence belongs to the purine/pyrimidine phosphoribosyltransferase family. PyrE subfamily. In terms of assembly, homodimer. It depends on Mg(2+) as a cofactor.

The catalysed reaction is orotidine 5'-phosphate + diphosphate = orotate + 5-phospho-alpha-D-ribose 1-diphosphate. Its pathway is pyrimidine metabolism; UMP biosynthesis via de novo pathway; UMP from orotate: step 1/2. In terms of biological role, catalyzes the transfer of a ribosyl phosphate group from 5-phosphoribose 1-diphosphate to orotate, leading to the formation of orotidine monophosphate (OMP). The chain is Orotate phosphoribosyltransferase from Halorhodospira halophila (strain DSM 244 / SL1) (Ectothiorhodospira halophila (strain DSM 244 / SL1)).